The primary structure comprises 358 residues: Methionine aminopeptidase 2 (358 aa).

Histidine 109 is a binding site for substrate. Aspartate 130, aspartate 141, and histidine 210 together coordinate a divalent metal cation. Histidine 218 is a substrate binding site. Residues glutamate 243 and glutamate 339 each contribute to the a divalent metal cation site.

It belongs to the peptidase M24A family. Methionine aminopeptidase eukaryotic type 2 subfamily. It depends on Co(2+) as a cofactor. Zn(2+) serves as cofactor. The cofactor is Mn(2+). Fe(2+) is required as a cofactor.

It is found in the cytoplasm. It carries out the reaction Release of N-terminal amino acids, preferentially methionine, from peptides and arylamides.. Its function is as follows. Cotranslationally removes the N-terminal methionine from nascent proteins. The N-terminal methionine is often cleaved when the second residue in the primary sequence is small and uncharged (Met-Ala-, Cys, Gly, Pro, Ser, Thr, or Val). This Encephalitozoon intestinalis (strain ATCC 50506) (Microsporidian parasite) protein is Methionine aminopeptidase 2.